A 42-amino-acid chain; its full sequence is uncharacterized protein (42 aa).

The segment at 1–42 (MTTGKPQSFEKMRTPFPGRSKAKGPQSDIIPSAPPNTPVTEH) is disordered. Residues 32-42 (SAPPNTPVTEH) show a composition bias toward pro residues.

This is an uncharacterized protein from Schizosaccharomyces pombe (strain 972 / ATCC 24843) (Fission yeast).